Here is a 629-residue protein sequence, read N- to C-terminus: Pescadillo homolog (629 aa).

One can recognise a BRCT domain in the interval 321 to 414 (RLRTLFKGLK…QLLPTNKYFI (94 aa)). 3 disordered regions span residues 439 to 470 (KALLDPSLIETHAQSDEDSEDEAEKEEEETVD), 488 to 568 (EYKK…MVKP), and 598 to 629 (IEASEKEARKTAKREARKEAAAAAAKASKLGK). Phosphoserine occurs at positions 453 and 457. 2 stretches are compositionally biased toward acidic residues: residues 454-470 (DEDSEDEAEKEEEETVD) and 498-523 (VNEDEEDPEDDDEDDDEEEAEEEELD). Over residues 524–535 (EKSKRLQEEKQK) the composition is skewed to basic and acidic residues. A compositionally biased stretch (basic residues) spans 542-551 (KVHKVNKRQV). Basic and acidic residues-rich tracts occupy residues 552-561 (HKAEVDEHRL) and 598-617 (IEASEKEARKTAKREARKEA). A coiled-coil region spans residues 584-627 (KEKEEWLLRKKRRTIEASEKEARKTAKREARKEAAAAAAKASKL). Over residues 618-629 (AAAAAKASKLGK) the composition is skewed to low complexity.

It belongs to the pescadillo family.

It localises to the nucleus. It is found in the nucleolus. The protein localises to the nucleoplasm. In terms of biological role, required for maturation of ribosomal RNAs and formation of the large ribosomal subunit. This is Pescadillo homolog from Drosophila erecta (Fruit fly).